Here is a 328-residue protein sequence, read N- to C-terminus: DNA-directed RNA polymerase subunit alpha (328 aa).

The segment at 1–233 (MHNSATEFLK…EQLEAFIDLR (233 aa)) is alpha N-terminal domain (alpha-NTD). The tract at residues 247–328 (FDPVLLRPVD…WPPVSILKND (82 aa)) is alpha C-terminal domain (alpha-CTD).

Belongs to the RNA polymerase alpha chain family. Homodimer. The RNAP catalytic core consists of 2 alpha, 1 beta, 1 beta' and 1 omega subunit. When a sigma factor is associated with the core the holoenzyme is formed, which can initiate transcription.

The enzyme catalyses RNA(n) + a ribonucleoside 5'-triphosphate = RNA(n+1) + diphosphate. DNA-dependent RNA polymerase catalyzes the transcription of DNA into RNA using the four ribonucleoside triphosphates as substrates. This Wigglesworthia glossinidia brevipalpis protein is DNA-directed RNA polymerase subunit alpha.